The primary structure comprises 189 residues: Potassium-transporting ATPase KdpC subunit (189 aa).

A helical transmembrane segment spans residues Leu8 to Gly28.

It belongs to the KdpC family. As to quaternary structure, the system is composed of three essential subunits: KdpA, KdpB and KdpC.

The protein resides in the cell inner membrane. Its function is as follows. Part of the high-affinity ATP-driven potassium transport (or Kdp) system, which catalyzes the hydrolysis of ATP coupled with the electrogenic transport of potassium into the cytoplasm. This subunit acts as a catalytic chaperone that increases the ATP-binding affinity of the ATP-hydrolyzing subunit KdpB by the formation of a transient KdpB/KdpC/ATP ternary complex. In Serratia proteamaculans (strain 568), this protein is Potassium-transporting ATPase KdpC subunit.